Reading from the N-terminus, the 122-residue chain is Large ribosomal subunit protein uL18 (122 aa).

Over residues 1–20 (MLKKVSKNTNRQGRHQRVRN) the composition is skewed to basic residues. The disordered stretch occupies residues 1–22 (MLKKVSKNTNRQGRHQRVRNKI).

This sequence belongs to the universal ribosomal protein uL18 family. As to quaternary structure, part of the 50S ribosomal subunit; part of the 5S rRNA/L5/L18/L25 subcomplex. Contacts the 5S and 23S rRNAs.

In terms of biological role, this is one of the proteins that bind and probably mediate the attachment of the 5S RNA into the large ribosomal subunit, where it forms part of the central protuberance. In Alkaliphilus metalliredigens (strain QYMF), this protein is Large ribosomal subunit protein uL18.